We begin with the raw amino-acid sequence, 110 residues long: U1-lycotoxin-Ls1ii (110 aa).

Residues 1–20 (MKFVLLFGVLLVTLFSYSSA) form the signal peptide. The propeptide occupies 21–44 (EMLDDFDQADEDELLSLIEKEEAR). Intrachain disulfides connect Cys-47-Cys-62, Cys-54-Cys-71, Cys-61-Cys-89, and Cys-73-Cys-87.

This sequence belongs to the neurotoxin 19 (CSTX) family. 03 subfamily. In terms of tissue distribution, expressed by the venom gland.

The protein resides in the secreted. The sequence is that of U1-lycotoxin-Ls1ii from Lycosa singoriensis (Wolf spider).